A 380-amino-acid chain; its full sequence is MRLLALHVHDFRNLPQVQLTPSAHATIAVGQNGQGKTNLLEALYFLATLKPLRAGRLSELVRWGSQGARVTGRFLLKGAEREIAVEVGGGTRQAFVDGKKASSLEDYFGGVSVVAFTPDDLEVVKGGPDSRRGFLDRAVFNRFPAFLRESREYARALKNRNRLLREGHTVDAVYLEAYDETLAKAGARIYSRRRALMAELAPRAQATFASIGRTVDPAVYNYRPAHLEGDFAAADETALAAMLRESLSARLRRDMERGFTSVGPHSDDVSVTLGGRSARAYASQGQQRALVLGWKIAEIENLEAAMGFLPLLLLDDVSSELDPERNAYLMGYLAQSGAQVVLTTTDGSLVRGAAADDTLWLDVHGGQVAVRADAEPPPAN.

30 to 37 (GQNGQGKT) provides a ligand contact to ATP.

This sequence belongs to the RecF family.

The protein localises to the cytoplasm. The RecF protein is involved in DNA metabolism; it is required for DNA replication and normal SOS inducibility. RecF binds preferentially to single-stranded, linear DNA. It also seems to bind ATP. In Myxococcus xanthus (strain DK1622), this protein is DNA replication and repair protein RecF.